Reading from the N-terminus, the 359-residue chain is MPSLLLVVVAALLSSWAQLLTDANSWWSLALNPVQRPEMFIIGAQPVCSQLPGLSPGQRKLCQLYQEHMSYIGEGAKTGIRECQHQFRQRRWNCSTVDNTSVFGRVMQIGSRETAFTYAVSAAGVVNAISRACREGELSTCGCSRAARPKDLPRDWLWGGCGDNVEYGYRFAKEFVDAREREKNFAKGSEEQGRALMNLQNNEAGRRAVYKMADVACKCHGVSGSCSLKTCWLQLAEFRKVGDRLKEKYDSAAAMRITRQGKLELANSRFNQPTPEDLVYVDPSPDYCLRNETTGSLGTQGRLCNKTSEGMDGCELMCCGRGYDRFKSVQVERCHCRFHWCCFVRCKKCTEVVDQYVCK.

The first 17 residues, 1–17, serve as a signal peptide directing secretion; sequence MPSLLLVVVAALLSSWA. A disulfide bridge connects residues Cys-83 and Cys-94. Residues Asn-93 and Asn-99 are each glycosylated (N-linked (GlcNAc...) asparagine). Intrachain disulfides connect Cys-133–Cys-141, Cys-143–Cys-161, Cys-217–Cys-231, Cys-219–Cys-226, Cys-288–Cys-319, Cys-304–Cys-314, Cys-318–Cys-358, Cys-334–Cys-349, Cys-336–Cys-346, and Cys-341–Cys-342. The O-palmitoleoyl serine; by PORCN moiety is linked to residue Ser-223. Asn-291 and Asn-305 each carry an N-linked (GlcNAc...) asparagine glycan.

The protein belongs to the Wnt family. Interacts with PORCN. Post-translationally, palmitoleoylation is required for efficient binding to frizzled receptors. Depalmitoleoylation leads to Wnt signaling pathway inhibition.

It localises to the secreted. The protein localises to the extracellular space. It is found in the extracellular matrix. Its function is as follows. Ligand for members of the frizzled family of seven transmembrane receptors. Probable developmental protein. May be a signaling molecule which affects the development of discrete regions of tissues. Is likely to signal over only few cell diameters. The sequence is that of Protein Wnt-5b (Wnt5b) from Mus musculus (Mouse).